The chain runs to 102 residues: NADH-quinone oxidoreductase subunit K (102 aa).

The next 3 helical transmembrane spans lie at 6 to 26 (LTGFMILAAGLFAAGVFGVLA), 30 to 50 (ILFQLIALEVALSGPALAFIA), and 63 to 83 (MFVLTLTLAAAEVAVGLALFL).

Belongs to the complex I subunit 4L family. In terms of assembly, NDH-1 is composed of 14 different subunits. Subunits NuoA, H, J, K, L, M, N constitute the membrane sector of the complex.

The protein resides in the cell inner membrane. It carries out the reaction a quinone + NADH + 5 H(+)(in) = a quinol + NAD(+) + 4 H(+)(out). Functionally, NDH-1 shuttles electrons from NADH, via FMN and iron-sulfur (Fe-S) centers, to quinones in the respiratory chain. The immediate electron acceptor for the enzyme in this species is believed to be ubiquinone. Couples the redox reaction to proton translocation (for every two electrons transferred, four hydrogen ions are translocated across the cytoplasmic membrane), and thus conserves the redox energy in a proton gradient. This Rhodopseudomonas palustris (strain BisA53) protein is NADH-quinone oxidoreductase subunit K.